The following is a 559-amino-acid chain: Glucose-6-phosphate isomerase (559 aa).

Residue Glu-352 is the Proton donor of the active site. Catalysis depends on residues His-383 and Lys-511.

The protein belongs to the GPI family.

The protein resides in the cytoplasm. It carries out the reaction alpha-D-glucose 6-phosphate = beta-D-fructose 6-phosphate. The protein operates within carbohydrate biosynthesis; gluconeogenesis. It participates in carbohydrate degradation; glycolysis; D-glyceraldehyde 3-phosphate and glycerone phosphate from D-glucose: step 2/4. In terms of biological role, catalyzes the reversible isomerization of glucose-6-phosphate to fructose-6-phosphate. This chain is Glucose-6-phosphate isomerase, found in Chlorobium phaeobacteroides (strain DSM 266 / SMG 266 / 2430).